A 416-amino-acid polypeptide reads, in one-letter code: 4-hydroxy-3-methylbut-2-en-1-yl diphosphate synthase (flavodoxin) (416 aa).

[4Fe-4S] cluster is bound by residues Cys-304, Cys-307, Cys-350, and Glu-357.

This sequence belongs to the IspG family. It depends on [4Fe-4S] cluster as a cofactor.

It carries out the reaction (2E)-4-hydroxy-3-methylbut-2-enyl diphosphate + oxidized [flavodoxin] + H2O + 2 H(+) = 2-C-methyl-D-erythritol 2,4-cyclic diphosphate + reduced [flavodoxin]. The protein operates within isoprenoid biosynthesis; isopentenyl diphosphate biosynthesis via DXP pathway; isopentenyl diphosphate from 1-deoxy-D-xylulose 5-phosphate: step 5/6. Its function is as follows. Converts 2C-methyl-D-erythritol 2,4-cyclodiphosphate (ME-2,4cPP) into 1-hydroxy-2-methyl-2-(E)-butenyl 4-diphosphate. This is 4-hydroxy-3-methylbut-2-en-1-yl diphosphate synthase (flavodoxin) from Rhizobium leguminosarum bv. trifolii (strain WSM2304).